The sequence spans 151 residues: Ubiquitin-conjugating enzyme E2 W (151 aa).

Met1 is covalently cross-linked (Peptide (Met-Gly) (interchain with G-Cter in ubiquitin)). A UBC core domain is found at 3–151 (SMQKRLQKEL…TKWWYHDDTC (149 aa)). Cys91 (glycyl thioester intermediate) is an active-site residue.

This sequence belongs to the ubiquitin-conjugating enzyme family. Homodimer. Interacts with FANCL. Interacts with STUB1/CHIP. In terms of processing, autoubiquitinated at Met-1.

It localises to the nucleus. The catalysed reaction is S-ubiquitinyl-[E1 ubiquitin-activating enzyme]-L-cysteine + [E2 ubiquitin-conjugating enzyme]-L-cysteine = [E1 ubiquitin-activating enzyme]-L-cysteine + S-ubiquitinyl-[E2 ubiquitin-conjugating enzyme]-L-cysteine.. The enzyme catalyses S-ubiquitinyl-[E1 ubiquitin-activating enzyme]-L-cysteine + [acceptor protein]-N-terminal-amino acid = [E1 ubiquitin-activating enzyme]-L-cysteine + N-terminal-ubiquitinyl-[acceptor protein].. It functions in the pathway protein modification; protein ubiquitination. Functionally, accepts ubiquitin from the E1 complex and catalyzes its covalent attachment to other proteins. Specifically monoubiquitinates the N-terminus of various substrates, including ATXN3, MAPT/TAU, POLR2H/RPB8 and STUB1/CHIP, by recognizing backbone atoms of disordered N-termini. Involved in degradation of misfolded chaperone substrates by mediating monoubiquitination of STUB1/CHIP, leading to recruitment of ATXN3 to monoubiquitinated STUB1/CHIP, and restriction of the length of ubiquitin chain attached to STUB1/CHIP substrates by ATXN3. After UV irradiation, but not after mitomycin-C (MMC) treatment, acts as a specific E2 ubiquitin-conjugating enzyme for the Fanconi anemia complex by associating with E3 ubiquitin-protein ligase FANCL and catalyzing monoubiquitination of FANCD2, a key step in the DNA damage pathway. In vitro catalyzes 'Lys-11'-linked polyubiquitination. UBE2W-catalyzed ubiquitination also occurs in the presence of inactive RING/U-box type E3s, i.e. lacking the active site cysteine residues to form thioester bonds with ubiquitin, or even in the absence of E3, albeit at a slower rate. The polypeptide is Ubiquitin-conjugating enzyme E2 W (Ube2w) (Mus musculus (Mouse)).